Here is a 633-residue protein sequence, read N- to C-terminus: Endosomal/prevacuolar sodium/hydrogen exchanger (633 aa).

Residues 1 to 21 (MLSKVLLNIAFKVLLTTAKRA) form the signal peptide. Over 22 to 61 (VDPDDDDELLPSPDLPGSDDPIAGDPDVDLNPVTEEMFSS) the chain is Lumenal. Residues 25-44 (DDDDELLPSPDLPGSDDPIA) are disordered. Residues 31 to 42 (LPSPDLPGSDDP) are compositionally biased toward low complexity. Residues 62–82 (WALFIMLLLLISALWSSYYLT) form a helical membrane-spanning segment. Residues 83–85 (QKR) lie on the Cytoplasmic side of the membrane. The helical transmembrane segment at 86–106 (IRAVHETVLSIFYGMVIGLII) threads the bilayer. Topologically, residues 107–117 (RMSPGHYIQDT) are lumenal. A helical membrane pass occupies residues 118 to 138 (VTFNSSYFFNVLLPPIILNSG). An Amiloride-binding motif is present at residues 124 to 133 (YFFNVLLPPI). Residues 139 to 152 (YELNQVNFFNNMLS) are Cytoplasmic-facing. The helical transmembrane segment at 153-173 (ILIFAIPGTFISAVVIGIILY) threads the bilayer. The Lumenal portion of the chain corresponds to 174–189 (IWTFLGLESIDISFAD). The helical transmembrane segment at 190 to 211 (AMSVGATLSATDPVTILSIFNA) threads the bilayer. Topologically, residues 212 to 217 (YKVDPK) are cytoplasmic. Residues 218-238 (LYTIIFGESLLNDAISIVMFE) traverse the membrane as a helical segment. Topologically, residues 239–258 (TCQKFHGQPATFSSVFEGAG) are lumenal. Residues 259 to 279 (LFLMTFSVSLLIGVLIGILVA) traverse the membrane as a helical segment. The Cytoplasmic portion of the chain corresponds to 280 to 288 (LLLKHTHIR). A helical membrane pass occupies residues 289-308 (RYPQIESCLILLIAYESYFF). At 309 to 313 (SNGCH) the chain is on the lumenal side. A helical transmembrane segment spans residues 314 to 333 (MSGIVSLLFCGITLKHYAYY). Over 334–344 (NMSRRSQITIK) the chain is Cytoplasmic. A helical transmembrane segment spans residues 345–364 (YIFQLLARLSENFIFIYLGL). The Cytoplasmic portion of the chain corresponds to 365–376 (ELFTEVELVYKP). The chain crosses the membrane as a helical span at residues 377-397 (LLIIVAAISICVARWCAVFPL). Topologically, residues 398-431 (SQFVNWIYRVKTIRSMSGITGENISVPDEIPYNY) are lumenal. Asn420 is a glycosylation site (N-linked (GlcNAc...) asparagine). The helical transmembrane segment at 432–452 (QMMTFWAGLRGAVGVALALGI) threads the bilayer. Residues 453-457 (QGEYK) are Cytoplasmic-facing. Residues 458–478 (FTLLATVLVVVVLTVIIFGGT) traverse the membrane as a helical segment. Position 490 is a phosphothreonine (Thr490). A Phosphoserine modification is found at Ser494. Phosphothreonine is present on Thr498. Ser499 carries the phosphoserine modification. Residues Asn515, Asn550, and Asn563 are each glycosylated (N-linked (GlcNAc...) asparagine). The disordered stretch occupies residues 553–578 (TTGGNTFGGLNETENTSPNPARSSMD). Polar residues predominate over residues 564 to 574 (ETENTSPNPAR). Position 569 is a phosphoserine (Ser569).

It belongs to the monovalent cation:proton antiporter 1 (CPA1) transporter (TC 2.A.36) family. Interacts with CYP6.

The protein localises to the endosome membrane. It is found in the prevacuolar compartment membrane. Functionally, endosomal/prevacuolar electroneutral Na(+)/H(+) exchanger which mediates intracellular sequestration of Na(+) cations, regulates vacuolar pH and contributes to osmotolerance following sudden exposure to hyperosmotic media. Also contributes to the postdiauxic/stationary phase resistance to osmotic stress and allows for the continued growth of cells until the acquired osmotolerance response can occur. Involved in hygromycin resistance probably through its influence on the electrochemical proton gradient affecting secondarily the entrance of hygromycin. Mediates pH-dependent vesicle trafficking out of the endosome. Contributes to K(+) sequestration and homeostasis. This chain is Endosomal/prevacuolar sodium/hydrogen exchanger (NHX1), found in Saccharomyces cerevisiae (strain ATCC 204508 / S288c) (Baker's yeast).